The sequence spans 273 residues: Dermonecrotic toxin LhSicTox-alphaIA2avi (273 aa).

Histidine 5 is a catalytic residue. Residues glutamate 25 and aspartate 27 each coordinate Mg(2+). The active-site Nucleophile is the histidine 41. 2 cysteine pairs are disulfide-bonded: cysteine 45/cysteine 51 and cysteine 47/cysteine 190. A Mg(2+)-binding site is contributed by aspartate 85.

This sequence belongs to the arthropod phospholipase D family. Class II subfamily. Mg(2+) serves as cofactor. Expressed by the venom gland.

It localises to the secreted. It catalyses the reaction an N-(acyl)-sphingosylphosphocholine = an N-(acyl)-sphingosyl-1,3-cyclic phosphate + choline. It carries out the reaction an N-(acyl)-sphingosylphosphoethanolamine = an N-(acyl)-sphingosyl-1,3-cyclic phosphate + ethanolamine. The catalysed reaction is a 1-acyl-sn-glycero-3-phosphocholine = a 1-acyl-sn-glycero-2,3-cyclic phosphate + choline. The enzyme catalyses a 1-acyl-sn-glycero-3-phosphoethanolamine = a 1-acyl-sn-glycero-2,3-cyclic phosphate + ethanolamine. Functionally, dermonecrotic toxins cleave the phosphodiester linkage between the phosphate and headgroup of certain phospholipids (sphingolipid and lysolipid substrates), forming an alcohol (often choline) and a cyclic phosphate. This toxin acts on sphingomyelin (SM). It may also act on ceramide phosphoethanolamine (CPE), lysophosphatidylcholine (LPC) and lysophosphatidylethanolamine (LPE), but not on lysophosphatidylserine (LPS), and lysophosphatidylglycerol (LPG). It acts by transphosphatidylation, releasing exclusively cyclic phosphate products as second products. Induces dermonecrosis, hemolysis, increased vascular permeability, edema, inflammatory response, and platelet aggregation. The polypeptide is Dermonecrotic toxin LhSicTox-alphaIA2avi (Loxosceles hirsuta (Recluse spider)).